Consider the following 204-residue polypeptide: MTEKLKQGIDQLGLKVAETIQQSMLAFLAFLQKWNQAYNLTAITEIKSMITHHLLDSLSILPYLKGDKILDVGSGAGFPGIPLAFACPEKKFTLIDSKAKKTAFLLQAASRFKITNVTIIQERVGSYQPGFYFDTITCRALGSVREIMEQTNHLLRSGGQWLIMKGAYPEKELRGTDASAIVHVLNVPGLKAERHLVEVKNNKG.

Residues glycine 73, phenylalanine 78, and arginine 139 each coordinate S-adenosyl-L-methionine.

Belongs to the methyltransferase superfamily. RNA methyltransferase RsmG family.

It localises to the cytoplasm. The catalysed reaction is guanosine(527) in 16S rRNA + S-adenosyl-L-methionine = N(7)-methylguanosine(527) in 16S rRNA + S-adenosyl-L-homocysteine. Specifically methylates the N7 position of guanine in position 527 of 16S rRNA. The polypeptide is Ribosomal RNA small subunit methyltransferase G (Coxiella burnetii (strain RSA 331 / Henzerling II)).